Here is a 272-residue protein sequence, read N- to C-terminus: F-box protein PP2-B10 (272 aa).

An F-box domain is found at 11–57 (SSPFDSFPEDCISYIISFTNPRDACVAATVSKTFESTVKSDIIWEKF).

In terms of assembly, part of a SCF (ASK-cullin-F-box) protein ligase complex. Interacts with SKP1B/ASK2, ASK11 and ASK12.

The protein operates within protein modification; protein ubiquitination. Functionally, component of SCF(ASK-cullin-F-box) E3 ubiquitin ligase complexes, which may mediate the ubiquitination and subsequent proteasomal degradation of target proteins. The polypeptide is F-box protein PP2-B10 (PP2B10) (Arabidopsis thaliana (Mouse-ear cress)).